The following is a 110-amino-acid chain: Large ribosomal subunit protein uL22 (110 aa).

The protein belongs to the universal ribosomal protein uL22 family. In terms of assembly, part of the 50S ribosomal subunit.

In terms of biological role, this protein binds specifically to 23S rRNA; its binding is stimulated by other ribosomal proteins, e.g. L4, L17, and L20. It is important during the early stages of 50S assembly. It makes multiple contacts with different domains of the 23S rRNA in the assembled 50S subunit and ribosome. The globular domain of the protein is located near the polypeptide exit tunnel on the outside of the subunit, while an extended beta-hairpin is found that lines the wall of the exit tunnel in the center of the 70S ribosome. The polypeptide is Large ribosomal subunit protein uL22 (Mycoplasma mobile (strain ATCC 43663 / 163K / NCTC 11711) (Mesomycoplasma mobile)).